The chain runs to 361 residues: MALTLEALAARFGGEIVGDGRCEVRALAPLDQAGPRQLAFLANPKYLAQVETTGAGAVLIAPGDLEKLGAAAHGRNFIVTPNPYAYFARVAQMFIDLAAPPRAAGVHPSATIDPAAQVAASAVIGPHVTVEAGAVIGERAQLDANVFVGRGTRIGDDSHLYPNVAIYHGCTLGPRAIVHSGAVIGSDGFGFAPDFVGEGDARTGAWVKIPQVGGVKVGPDVEIGANTTIDRGAMADTVIDECVKIDNLVQIGHNCRIGAYTVIAGCAGIAGSTTIGKHCMIGGAVGIAGHVTLGDYVIVTAKSGVSKSLPKAGIYTSAFPAVEHGDWNRSAALVRNLDKLRDRIKALETALAAREGDAGGA.

The active-site Proton acceptor is histidine 253.

The protein belongs to the transferase hexapeptide repeat family. LpxD subfamily. In terms of assembly, homotrimer.

The enzyme catalyses a UDP-3-O-[(3R)-3-hydroxyacyl]-alpha-D-glucosamine + a (3R)-hydroxyacyl-[ACP] = a UDP-2-N,3-O-bis[(3R)-3-hydroxyacyl]-alpha-D-glucosamine + holo-[ACP] + H(+). It functions in the pathway bacterial outer membrane biogenesis; LPS lipid A biosynthesis. Catalyzes the N-acylation of UDP-3-O-acylglucosamine using 3-hydroxyacyl-ACP as the acyl donor. Is involved in the biosynthesis of lipid A, a phosphorylated glycolipid that anchors the lipopolysaccharide to the outer membrane of the cell. The chain is UDP-3-O-acylglucosamine N-acyltransferase from Burkholderia pseudomallei (strain 1710b).